A 173-amino-acid chain; its full sequence is Small ribosomal subunit protein uS5 (173 aa).

Positions 17–80 (WQERVIQIRR…ADGKKQLIEV (64 aa)) constitute an S5 DRBM domain.

The protein belongs to the universal ribosomal protein uS5 family. As to quaternary structure, part of the 30S ribosomal subunit. Contacts proteins S4 and S8.

In terms of biological role, with S4 and S12 plays an important role in translational accuracy. Its function is as follows. Located at the back of the 30S subunit body where it stabilizes the conformation of the head with respect to the body. The protein is Small ribosomal subunit protein uS5 of Synechocystis sp. (strain ATCC 27184 / PCC 6803 / Kazusa).